The sequence spans 273 residues: Mitochondrial distribution and morphology protein 12 (273 aa).

Residues 1 to 273 (MSIDFDWSKL…LVWPSYITIE (273 aa)) enclose the SMP-LTD domain. The interval 124-145 (LTSPIPESRPSTPMDNHQERDR) is disordered.

It belongs to the MDM12 family. Component of the ER-mitochondria encounter structure (ERMES) or MDM complex, composed of mmm1, mdm10, mdm12 and mdm34. A mmm1 homodimer associates with one molecule of mdm12 on each side in a pairwise head-to-tail manner, and the SMP-LTD domains of mmm1 and mdm12 generate a continuous hydrophobic tunnel for phospholipid trafficking.

It is found in the mitochondrion outer membrane. It localises to the endoplasmic reticulum membrane. Component of the ERMES/MDM complex, which serves as a molecular tether to connect the endoplasmic reticulum (ER) and mitochondria. Components of this complex are involved in the control of mitochondrial shape and protein biogenesis, and function in nonvesicular lipid trafficking between the ER and mitochondria. Mdm12 is required for the interaction of the ER-resident membrane protein mmm1 and the outer mitochondrial membrane-resident beta-barrel protein mdm10. The mdm12-mmm1 subcomplex functions in the major beta-barrel assembly pathway that is responsible for biogenesis of all mitochondrial outer membrane beta-barrel proteins, and acts in a late step after the SAM complex. The mdm10-mdm12-mmm1 subcomplex further acts in the TOM40-specific pathway after the action of the mdm12-mmm1 complex. Essential for establishing and maintaining the structure of mitochondria and maintenance of mtDNA nucleoids. This Schizosaccharomyces pombe (strain 972 / ATCC 24843) (Fission yeast) protein is Mitochondrial distribution and morphology protein 12.